We begin with the raw amino-acid sequence, 226 residues long: Methylamine utilization ferredoxin-type protein MauM (226 aa).

4Fe-4S ferredoxin-type domains follow at residues P59–W87, T95–T127, V136–I172, and Q180–R211. Positions 67, 70, 73, 77, 105, 108, 113, 117, 145, 153, 156, 160, 189, 192, 195, and 199 each coordinate [4Fe-4S] cluster.

It participates in one-carbon metabolism; methylamine degradation. Functionally, involved in electron transfer. The protein is Methylamine utilization ferredoxin-type protein MauM (mauM) of Methylophilus methylotrophus (Bacterium W3A1).